Reading from the N-terminus, the 228-residue chain is GrpE protein homolog, mitochondrial (228 aa).

The segment covering 46–57 (DEAKSEESKENN) has biased composition (basic and acidic residues). Positions 46–66 (DEAKSEESKENNEDLTEEQSE) are disordered.

Belongs to the GrpE family. In terms of assembly, component of the PAM complex, at least composed of SSC1 (mtHsp70), MGE1, TIM44, PAM16/TIM16, PAM17 and PAM18/TIM14. Interacts with SSQ1. In terms of processing, the N-terminus is blocked.

The protein localises to the mitochondrion matrix. Essential component of the PAM complex, a complex required for the translocation of transit peptide-containing proteins from the inner membrane into the mitochondrial matrix in an ATP-dependent manner. Seems to control the nucleotide-dependent binding of SSC1 to substrate proteins and the association of SSC1 with TIM44. The polypeptide is GrpE protein homolog, mitochondrial (MGE1) (Saccharomyces cerevisiae (strain ATCC 204508 / S288c) (Baker's yeast)).